The sequence spans 278 residues: Elongation factor Ts (278 aa).

An involved in Mg(2+) ion dislocation from EF-Tu region spans residues 81–84 (TDFV).

It belongs to the EF-Ts family.

The protein resides in the cytoplasm. In terms of biological role, associates with the EF-Tu.GDP complex and induces the exchange of GDP to GTP. It remains bound to the aminoacyl-tRNA.EF-Tu.GTP complex up to the GTP hydrolysis stage on the ribosome. This is Elongation factor Ts from Thermobifida fusca (strain YX).